The sequence spans 75 residues: UPF0181 protein ETA_15280 (75 aa).

Belongs to the UPF0181 family.

In Erwinia tasmaniensis (strain DSM 17950 / CFBP 7177 / CIP 109463 / NCPPB 4357 / Et1/99), this protein is UPF0181 protein ETA_15280.